Here is a 222-residue protein sequence, read N- to C-terminus: Transmembrane reductase CYB561D2 (222 aa).

Residues 2–17 are Cytoplasmic-facing; the sequence is ALSVETESHIYRALRT. Residues 14–217 form the Cytochrome b561 domain; sequence ALRTASGAAA…NQVSNAYLYR (204 aa). Residues 18–38 form a helical membrane-spanning segment; it reads ASGAAAHLVALGFTIFVAVLA. Over 39–46 the chain is Lumenal; sequence RPGSSLFS. The chain crosses the membrane as a helical span at residues 47–67; that stretch reads WHPVLMSLAFSFLMTEALLMF. Residue His-48 coordinates heme b. The Cytoplasmic segment spans residues 68-85; it reads SPESSLLRSLSRKVRARC. 2 residues coordinate heme b: His-86 and His-120. The chain crosses the membrane as a helical span at residues 86–106; that stretch reads HWVLQLLALLCALLGLGLVIL. At 107-122 the chain is on the lumenal side; that stretch reads HKEQLGKAHLTTRHGQ. Residues 123–143 form a helical membrane-spanning segment; sequence AGLLAVLWAGLQCSGGMGLLY. The Cytoplasmic segment spans residues 144 to 162; it reads PKLLPRWPLAKLKLYHATS. Residue His-159 participates in heme b binding. The chain crosses the membrane as a helical span at residues 163 to 183; it reads GLVGYLLGSASLLLGMFSLWF. Residues 184–186 lie on the Lumenal side of the membrane; it reads TAT. Residues 187–207 form a helical membrane-spanning segment; that stretch reads VTGGAWYLAVLCPILTSLVIM. Topologically, residues 208–222 are cytoplasmic; sequence NQVSNAYLYRKRIQP.

Heme b is required as a cofactor. In terms of tissue distribution, highly expressed in the brain, lung, liver, and kidney. Moderately expressed in the heart, placenta, skeletal muscle, and pancreas.

The protein resides in the endoplasmic reticulum membrane. It localises to the cytoplasmic vesicle membrane. It carries out the reaction monodehydro-L-ascorbate radical(out) + L-ascorbate(in) = monodehydro-L-ascorbate radical(in) + L-ascorbate(out). The catalysed reaction is Fe(3+)(out) + L-ascorbate(in) = monodehydro-L-ascorbate radical(in) + Fe(2+)(out) + H(+). In terms of biological role, transmembrane reductase that may use ascorbate as an electron donor in the cytoplasm and transfer electrons across endoplasmic reticulum membranes to reduce monodehydro-L-ascorbate radical and iron cations Fe(3+) in the lumen of that compartment. The protein is Transmembrane reductase CYB561D2 of Mus musculus (Mouse).